Here is a 236-residue protein sequence, read N- to C-terminus: Small ribosomal subunit protein uS2c (236 aa).

The protein belongs to the universal ribosomal protein uS2 family.

It localises to the plastid. The protein resides in the chloroplast. The protein is Small ribosomal subunit protein uS2c (rps2) of Triticum aestivum (Wheat).